A 513-amino-acid polypeptide reads, in one-letter code: Carboxyethyl-arginine beta-lactam-synthase (513 aa).

Mg(2+) is bound by residues aspartate 253 and aspartate 351.

This sequence belongs to the asparagine synthetase family. As to quaternary structure, homodimer. Mg(2+) serves as cofactor.

The catalysed reaction is N(2)-(2-carboxyethyl)-L-arginine + ATP = deoxyamidinoproclavaminate + AMP + diphosphate + H(+). The protein operates within antibiotic biosynthesis; clavulanate biosynthesis; clavulanate from D-glyceraldehyde 3-phosphate and L-arginine: step 2/8. The protein is Carboxyethyl-arginine beta-lactam-synthase (bls) of Streptomyces clavuligerus.